The chain runs to 125 residues: Glycine cleavage system H protein (125 aa).

Residues 23–104 enclose the Lipoyl-binding domain; that stretch reads VVYIGITDYA…PYENWILKVK (82 aa). Lys-64 carries the N6-lipoyllysine modification.

It belongs to the GcvH family. In terms of assembly, the glycine cleavage system is composed of four proteins: P, T, L and H. (R)-lipoate serves as cofactor.

In terms of biological role, the glycine cleavage system catalyzes the degradation of glycine. The H protein shuttles the methylamine group of glycine from the P protein to the T protein. The protein is Glycine cleavage system H protein of Clostridioides difficile (strain 630) (Peptoclostridium difficile).